Here is a 417-residue protein sequence, read N- to C-terminus: Dibenzothiophene monooxygenase (417 aa).

Positions 18–124 (NDPVAVARGL…HLYTQIAQNN (107 aa)) are helical N-terminus. FMN-binding positions include Tyr-96, 129 to 134 (NASSEN), 159 to 163 (KHFCS), Arg-282, 369 to 370 (AR), and His-391. The tract at residues 125–233 (WWTGNASSEN…KVEPDEVLGA (109 aa)) is central beta-barrel N-terminus. The segment at 131–142 (SSENNSHVLDWK) is lid loop. Residues 234-417 (PNAFVLAFIQ…GQYPIPGFTS (184 aa)) form a helical C-terminus region.

This sequence belongs to the DszC flavin monooxygenase family. In terms of assembly, homotetramer formed by a dimer of dimers; FMN binds between monomers of the homodimer.

Its subcellular location is the cytoplasm. The enzyme catalyses dibenzothiophene + 2 FMNH2 + 2 O2 = dibenzothiophene 5,5-dioxide + 2 FMN + 2 H2O + 2 H(+). It carries out the reaction dibenzothiophene + FMNH2 + O2 = dibenzothiophene 5-oxide + FMN + H2O + H(+). The catalysed reaction is dibenzothiophene 5-oxide + FMNH2 + O2 = dibenzothiophene 5,5-dioxide + FMN + H2O + H(+). It participates in sulfur metabolism; dibenzothiophene degradation. Its activity is regulated as follows. DBT degradation completely inhibited by Cu(2+), Mn(2+), p-chloromercuribenzoic acid, 2,2-bipyridyl, 1,10-phenanthroline, and strongly inhibited by Zn(2+), 5,5'- Dithiobis(2-nitrobenzoic acid) and 8-quinolinol. Its function is as follows. Catalyzes the first step of the '4S' desulfurization pathway that removes covalently bound sulfur from dibenzothiophene (DBT) without breaking carbon-carbon bonds. Sulfur dioxygenase which converts DBT to DBT-sulfone (DBTO2 or DBT 5,5-dioxide) in a stepwise manner. Also acts on thioxanthen-9-one and 4,6-dimethyl DBT and 2,8-dimethyl DBT. This Rhodococcus erythropolis (Arthrobacter picolinophilus) protein is Dibenzothiophene monooxygenase.